The sequence spans 235 residues: Phosphoribosylaminoimidazole-succinocarboxamide synthase (235 aa).

This sequence belongs to the SAICAR synthetase family.

The catalysed reaction is 5-amino-1-(5-phospho-D-ribosyl)imidazole-4-carboxylate + L-aspartate + ATP = (2S)-2-[5-amino-1-(5-phospho-beta-D-ribosyl)imidazole-4-carboxamido]succinate + ADP + phosphate + 2 H(+). The protein operates within purine metabolism; IMP biosynthesis via de novo pathway; 5-amino-1-(5-phospho-D-ribosyl)imidazole-4-carboxamide from 5-amino-1-(5-phospho-D-ribosyl)imidazole-4-carboxylate: step 1/2. The chain is Phosphoribosylaminoimidazole-succinocarboxamide synthase from Clostridium perfringens (strain SM101 / Type A).